The following is a 215-amino-acid chain: Cytochrome b6 (215 aa).

The chain crosses the membrane as a helical span at residues 32 to 52 (IFYCLGGITLTCFLVQVATGF). Cys-35 contacts heme c. Heme b is bound by residues His-86 and His-100. 3 consecutive transmembrane segments (helical) span residues 90 to 110 (ASMM…TGGF), 116 to 136 (LTWV…VTGY), and 186 to 206 (LHTF…FPMI). His-187 and His-202 together coordinate heme b.

This sequence belongs to the cytochrome b family. PetB subfamily. In terms of assembly, the 4 large subunits of the cytochrome b6-f complex are cytochrome b6, subunit IV (17 kDa polypeptide, PetD), cytochrome f and the Rieske protein, while the 4 small subunits are PetG, PetL, PetM and PetN. The complex functions as a dimer. Requires heme b as cofactor. Heme c serves as cofactor.

Its subcellular location is the plastid. It is found in the chloroplast thylakoid membrane. Its function is as follows. Component of the cytochrome b6-f complex, which mediates electron transfer between photosystem II (PSII) and photosystem I (PSI), cyclic electron flow around PSI, and state transitions. The protein is Cytochrome b6 of Solanum bulbocastanum (Wild potato).